The primary structure comprises 269 residues: Autophagy-related protein 5 (269 aa).

Lys-102 participates in a covalent cross-link: Glycyl lysine isopeptide (Lys-Gly) (interchain with G-Cter in ATG12).

This sequence belongs to the ATG5 family. As to quaternary structure, conjugated with ATG12. The ATG5-ATG12 conjugate forms a complex with several units of ATG16. The ATG12-ATG5 conjugate also associates with ATG3. In terms of processing, conjugated to ATG12; which is essential for autophagy. Conjugation with ATG12 involves ATG7 as an E1-like activating enzyme and ATG10 as an E2-like conjugating enzyme.

The protein resides in the preautophagosomal structure membrane. Involved in cytoplasm to vacuole transport (Cvt) and autophagic vesicle formation. Autophagy is essential for maintenance of amino acid levels and protein synthesis under nitrogen starvation. Required for selective autophagic degradation of the nucleus (nucleophagy). Also required for mitophagy, which eliminates defective or superfluous mitochondria in order to fulfill cellular energy requirements and prevent excess ROS production. Conjugation with ATG12, through a ubiquitin-like conjugating system involving ATG7 as an E1-like activating enzyme and ATG10 as an E2-like conjugating enzyme, is essential for its function. The ATG12-ATG5 conjugate acts as an E3-like enzyme which is required for lipidation of ATG8 and ATG8 association to the vesicle membranes. ATG12-ATG5 rearranges the ATG3 catalytic center and enhances its E2 activity. Required for proper vegetative growth, asexual/sexual reproduction, but, unlike several plant and animal pathogenic fungi, where ATG5 is required for infection, in B.bassiana it is dispensable for pathogenesis. The protein is Autophagy-related protein 5 of Beauveria bassiana (strain ARSEF 2860) (White muscardine disease fungus).